The primary structure comprises 1097 residues: Leukemia inhibitory factor receptor (1097 aa).

The N-terminal stretch at 1–44 (MMNISLRLRRPPWMVDSNGRRMTSHFQWLLLTFILLYLMNQVTS) is a signal peptide. Residues 45-833 (EKRGAPRDLK…SMFVVTKENS (789 aa)) are Extracellular-facing. The Fibronectin type-III 1 domain occupies 46 to 131 (KRGAPRDLKC…ISKFTLNEKN (86 aa)). 2 cysteine pairs are disulfide-bonded: Cys-55-Cys-65 and Cys-82-Cys-90. N-linked (GlcNAc...) asparagine glycans are attached at residues Asn-85, Asn-131, Asn-143, Asn-191, Asn-243, and Asn-303. Cys-213 and Cys-270 are joined by a disulfide. 5 consecutive Fibronectin type-III domains span residues 332-434 (PPDI…VYPR), 435-534 (IPTS…TEAI), 538-629 (GPDT…IPND), 627-719 (PNDD…IGYI), and 724-833 (PIVA…KENS). Cys-341 and Cys-351 are joined by a disulfide. 8 N-linked (GlcNAc...) asparagine glycosylation sites follow: Asn-366, Asn-390, Asn-407, Asn-426, Asn-445, Asn-471, Asn-481, and Asn-489. Cys-466 and Cys-511 are disulfide-bonded. The short motif at 519–523 (WSKWS) is the WSXWS motif element. N-linked (GlcNAc...) asparagine glycosylation is found at Asn-572, Asn-652, Asn-663, Asn-680, Asn-729, and Asn-787. Residues 834-854 (VGLIIAILIPVAVAVIVGVVT) form a helical membrane-spanning segment. The Cytoplasmic segment spans residues 855 to 1097 (SILCYRKREW…TNFFQNKPND (243 aa)). Positions 869–877 (FYPDIPNPE) match the Box 1 motif motif. Ser-927 is modified (phosphoserine). Disordered stretches follow at residues 982–1005 (QPQA…KPQM) and 1022–1097 (LDKA…KPND). Composition is skewed to polar residues over residues 1032-1067 (ANVN…NSRQ) and 1086-1097 (SFTNFFQNKPND). Ser-1044 carries the phosphoserine modification.

Belongs to the type I cytokine receptor family. Type 2 subfamily. In terms of assembly, heterodimer composed of LIFR and IL6ST. The heterodimer formed by LIFR and IL6ST interacts with the complex formed by CNTF and CNTFR.

The protein localises to the cell membrane. Signal-transducing molecule. May have a common pathway with IL6ST. The soluble form inhibits the biological activity of LIF by blocking its binding to receptors on target cells. The sequence is that of Leukemia inhibitory factor receptor (LIFR) from Canis lupus familiaris (Dog).